Here is a 365-residue protein sequence, read N- to C-terminus: Probable 7-methylxanthine methyltransferase 4 (365 aa).

Tyr18 contributes to the S-adenosyl-L-homocysteine binding site. Thr25 lines the theobromine pocket. The S-adenosyl-L-homocysteine site is built by Cys62, Gln67, Asp99, Leu100, Ser132, and Phe133. Theobromine is bound by residues Tyr150, His153, and Trp154. 4 residues coordinate Mg(2+): Asn170, Asp256, Phe258, and Asn259. Phe311 is a binding site for theobromine.

It belongs to the methyltransferase superfamily. Type-7 methyltransferase family. Mg(2+) is required as a cofactor.

It catalyses the reaction 7-methylxanthine + S-adenosyl-L-methionine = theobromine + S-adenosyl-L-homocysteine + H(+). It functions in the pathway alkaloid biosynthesis. Functionally, involved in the biosynthesis of theobromine. This chain is Probable 7-methylxanthine methyltransferase 4, found in Theobroma cacao (Cacao).